Reading from the N-terminus, the 425-residue chain is Serine--tRNA ligase (425 aa).

233–235 provides a ligand contact to L-serine; it reads TAE. Position 264 to 266 (264 to 266) interacts with ATP; it reads RRE. Position 287 (E287) interacts with L-serine. 351–354 is an ATP binding site; sequence EISS. Residue S387 participates in L-serine binding.

It belongs to the class-II aminoacyl-tRNA synthetase family. Type-1 seryl-tRNA synthetase subfamily. Homodimer. The tRNA molecule binds across the dimer.

It is found in the cytoplasm. It carries out the reaction tRNA(Ser) + L-serine + ATP = L-seryl-tRNA(Ser) + AMP + diphosphate + H(+). It catalyses the reaction tRNA(Sec) + L-serine + ATP = L-seryl-tRNA(Sec) + AMP + diphosphate + H(+). The protein operates within aminoacyl-tRNA biosynthesis; selenocysteinyl-tRNA(Sec) biosynthesis; L-seryl-tRNA(Sec) from L-serine and tRNA(Sec): step 1/1. In terms of biological role, catalyzes the attachment of serine to tRNA(Ser). Is also able to aminoacylate tRNA(Sec) with serine, to form the misacylated tRNA L-seryl-tRNA(Sec), which will be further converted into selenocysteinyl-tRNA(Sec). The polypeptide is Serine--tRNA ligase (Thermotoga sp. (strain RQ2)).